The following is a 121-amino-acid chain: Ubiquitin-related modifier 1 (121 aa).

Position 121 is a 1-thioglycine (Gly121). Gly121 is covalently cross-linked (Glycyl lysine isopeptide (Gly-Lys) (interchain with K-? in acceptor proteins)).

It belongs to the URM1 family. C-terminal thiocarboxylation occurs in 2 steps, it is first acyl-adenylated (-COAMP) via the hesA/moeB/thiF part of UBA4, then thiocarboxylated (-COSH) via the rhodanese domain of UBA4.

It is found in the cytoplasm. The protein operates within tRNA modification; 5-methoxycarbonylmethyl-2-thiouridine-tRNA biosynthesis. Its function is as follows. Acts as a sulfur carrier required for 2-thiolation of mcm(5)S(2)U at tRNA wobble positions of cytosolic tRNA(Lys), tRNA(Glu) and tRNA(Gln). Serves as sulfur donor in tRNA 2-thiolation reaction by being thiocarboxylated (-COSH) at its C-terminus by the MOCS3 homolog UBA4. The sulfur is then transferred to tRNA to form 2-thiolation of mcm(5)S(2)U. Prior mcm(5) tRNA modification by the elongator complex is required for 2-thiolation. Also acts as a ubiquitin-like protein (UBL) that is covalently conjugated via an isopeptide bond to lysine residues of target proteins such as AHP1. The thiocarboxylated form serves as substrate for conjugation and oxidative stress specifically induces the formation of UBL-protein conjugates. The polypeptide is Ubiquitin-related modifier 1 (Ajellomyces capsulatus (strain NAm1 / WU24) (Darling's disease fungus)).